A 326-amino-acid polypeptide reads, in one-letter code: DNA repair protein XRCC4 (326 aa).

The interval 1–212 (MERKVSRIYL…QLEESTKPER (212 aa)) is interaction with IFFO1. Ser-53 carries the phosphoserine; by PRKDC modification. 2 coiled-coil regions span residues 131–165 (LDTITEKQAKNEHLQKENERLLRDWNDVQGRFEKC) and 185–209 (NEKKTKIRSLHKLLNEVQQLEESTK). Positions 180–211 (FILVLNEKKTKIRSLHKLLNEVQQLEESTKPE) are interaction with LIG4. At Ser-193 the chain carries Phosphoserine; by PRKDC. The segment at 203–326 (QLEESTKPER…RNSSPEDLFD (124 aa)) is disordered. Basic and acidic residues predominate over residues 206–226 (ESTKPERENPCSDKTPEEHGL). The residue at position 227 (Tyr-227) is a Phosphotyrosine. Residue Ser-230 is modified to Phosphoserine. Thr-231 is modified (phosphothreonine). Ser-235 carries the phosphoserine modification. At Thr-244 the chain carries Phosphothreonine. Ser-250 bears the Phosphoserine mark. Ser-254 bears the Phosphoserine; by PRKDC mark. Residues 264–269 (RKRRHR) carry the Nuclear localization signal motif. Lys-290 participates in a covalent cross-link: Glycyl lysine isopeptide (Lys-Gly) (interchain with G-Cter in ubiquitin). Ser-295 carries the phosphoserine; by PRKDC modification. Ser-296 bears the Phosphoserine mark. 2 positions are modified to phosphoserine; by PRKDC: Ser-307 and Ser-312. A compositionally biased stretch (polar residues) spans 307–326 (SAENMSLETLRNSSPEDLFD). Residue Thr-315 is modified to Phosphothreonine; by PRKDC. Phosphoserine; by PRKDC occurs at positions 319 and 320.

The protein belongs to the XRCC4-XLF family. XRCC4 subfamily. Homodimer and homotetramer in solution. Interacts with NHEJ1/XLF; the interaction is direct and is mediated via a head-to-head interaction between N-terminal head regions. Interacts with LIG4; the LIG4-XRCC4 subcomplex has a 1:2 stoichiometry and XRCC4 is required for LIG4 stability. Component of the core long-range non-homologous end joining (NHEJ) complex (also named DNA-PK complex) composed of PRKDC, LIG4, XRCC4, XRCC6/Ku70, XRCC5/Ku86 and NHEJ1/XLF. Additional component of the NHEJ complex includes PAXX. Following autophosphorylation, PRKDC dissociates from DNA, leading to formation of the short-range NHEJ complex, composed of LIG4, XRCC4, XRCC6/Ku70, XRCC5/Ku86 and NHEJ1/XLF. Interacts with PRKDC; the interaction is direct. Interacts with XRCC6/Ku70; the interaction is direct. Interacts with APTX and APLF. Forms a heterotetramer with IFFO1; the interaction involves LIG4-free XRCC4 and leads to the relocalization of IFFO1 to the sites of DNA damage. Interacts with PNKP; mainly interacts with PNKP when phosphorylated at Thr-231, but is also able to interact at much lower level with PNKP when not unphosphorylated. Interacts with POLL (DNA polymerase lambda). As to quaternary structure, interacts with XKR4; interacts with the processed form of XKR4, which is cleaved by caspase. Phosphorylated by PRKDC at the C-terminus in response to DNA damage; Ser-254 and Ser-312 constitute the main phosphorylation sites. Phosphorylation by PRKDC at the C-terminus of XRCC4 and NHEJ1/XLF are highly redundant and regulate ability of the XRCC4-NHEJ1/XLF subcomplex to bridge DNA. Phosphorylation by PRKDC does not prevent interaction with NHEJ1/XLF but disrupts ability to bridge DNA and promotes detachment from DNA. Phosphorylation at Ser-319 and Ser-320 by PRKDC promotes recognition by the SCF(FBXW7) complex and subsequent ubiquitination via 'Lys-63'-linked ubiquitin. Phosphorylation at Thr-231 by CK2 promotes interaction with PNKP; regulating PNKP activity and localization to DNA damage sites. Phosphorylation by CK2 promotes interaction with APTX. In terms of processing, ubiquitinated at Lys-290 by the SCF(FBXW7) complex via 'Lys-63'-linked ubiquitination, thereby promoting double-strand break repair: the SCF(FBXW7) complex specifically recognizes XRCC4 when phosphorylated at Ser-319 and Ser-320 by PRKDC, and 'Lys-63'-linked ubiquitination facilitates DNA non-homologous end joining (NHEJ) by enhancing association with XRCC5/Ku80 and XRCC6/Ku70. Monoubiquitinated. Post-translationally, undergoes proteolytic processing by caspase-3 (CASP3). This generates the protein XRCC4, C-terminus (XRCC4/C), which translocates to the cytoplasm and activates phospholipid scramblase activity of XKR4, thereby promoting phosphatidylserine exposure on apoptotic cell surface.

It is found in the nucleus. The protein localises to the chromosome. Its subcellular location is the cytoplasm. DNA non-homologous end joining (NHEJ) core factor, required for double-strand break repair and V(D)J recombination. Acts as a scaffold protein that regulates recruitment of other proteins to DNA double-strand breaks (DSBs). Associates with NHEJ1/XLF to form alternating helical filaments that bridge DNA and act like a bandage, holding together the broken DNA until it is repaired. The XRCC4-NHEJ1/XLF subcomplex binds to the DNA fragments of a DSB in a highly diffusive manner and robustly bridges two independent DNA molecules, holding the broken DNA fragments in close proximity to one other. The mobility of the bridges ensures that the ends remain accessible for further processing by other repair factors. Plays a key role in the NHEJ ligation step of the broken DNA during DSB repair via direct interaction with DNA ligase IV (LIG4): the LIG4-XRCC4 subcomplex reseals the DNA breaks after the gap filling is completed. XRCC4 stabilizes LIG4, regulates its subcellular localization and enhances LIG4's joining activity. Binding of the LIG4-XRCC4 subcomplex to DNA ends is dependent on the assembly of the DNA-dependent protein kinase complex DNA-PK to these DNA ends. Promotes displacement of PNKP from processed strand break termini. Functionally, acts as an activator of the phospholipid scramblase activity of XKR4. This form, which is generated upon caspase-3 (CASP3) cleavage, translocates into the cytoplasm and interacts with XKR4, thereby promoting phosphatidylserine scramblase activity of XKR4 and leading to phosphatidylserine exposure on apoptotic cell surface. The polypeptide is DNA repair protein XRCC4 (Mus musculus (Mouse)).